A 384-amino-acid chain; its full sequence is Omega-6 fatty acid desaturase, endoplasmic reticulum (384 aa).

Residues 1 to 23 form a disordered region; that stretch reads MGAGGRMQVSPSPKKSETDTLKR. The span at 14-23 shows a compositional bias: basic and acidic residues; sequence KKSETDTLKR. Transmembrane regions (helical) follow at residues 56 to 76 and 84 to 104; these read LIWDIIVASCFYYVATTYFPL and VAWPLYWACQGVVLTGVWVIA. The short motif at 105–109 is the Histidine box-1 element; sequence HECGH. A helical membrane pass occupies residues 117 to 137; the sequence is WLDDTVGLIFHSFLLVPYFSW. The Histidine box-2 signature appears at 141-145; that stretch reads HRRHH. The next 3 membrane-spanning stretches (helical) occupy residues 180–200, 226–246, and 253–273; these read VMLTVQFTLGWPLYWAFNVSG, IYVSDAGILAVCYGLYRYAAA, and VCLYGVPLLIVNAFLVLITYL. Positions 316–320 match the Histidine box-3 motif; it reads HVAHH.

This sequence belongs to the fatty acid desaturase type 1 family.

The protein resides in the endoplasmic reticulum membrane. It participates in lipid metabolism; polyunsaturated fatty acid biosynthesis. Its function is as follows. ER (microsomal) omega-6 fatty acid desaturase introduces the second double bond in the biosynthesis of 18:3 fatty acids, important constituents of plant membranes. It is thought to use cytochrome b5 as an electron donor and to act on fatty acids esterified to phosphatidylcholine and, possibly, other phospholipids. This is Omega-6 fatty acid desaturase, endoplasmic reticulum from Brassica juncea (Indian mustard).